The primary structure comprises 159 residues: Protein-export protein SecB (159 aa).

Belongs to the SecB family. In terms of assembly, homotetramer, a dimer of dimers. One homotetramer interacts with 1 SecA dimer.

The protein resides in the cytoplasm. Functionally, one of the proteins required for the normal export of preproteins out of the cell cytoplasm. It is a molecular chaperone that binds to a subset of precursor proteins, maintaining them in a translocation-competent state. It also specifically binds to its receptor SecA. This chain is Protein-export protein SecB, found in Rhizobium etli (strain CIAT 652).